The primary structure comprises 211 residues: Dephospho-CoA kinase (211 aa).

One can recognise a DPCK domain in the interval 3 to 206 (VIGLTGGIAT…GGRGRRLPNA (204 aa)). An ATP-binding site is contributed by 11–16 (ATGKST).

It belongs to the CoaE family.

The protein resides in the cytoplasm. It carries out the reaction 3'-dephospho-CoA + ATP = ADP + CoA + H(+). It participates in cofactor biosynthesis; coenzyme A biosynthesis; CoA from (R)-pantothenate: step 5/5. Functionally, catalyzes the phosphorylation of the 3'-hydroxyl group of dephosphocoenzyme A to form coenzyme A. The chain is Dephospho-CoA kinase from Anaeromyxobacter dehalogenans (strain 2CP-C).